We begin with the raw amino-acid sequence, 68 residues long: conotoxin S11.3 (68 aa).

A signal peptide spans 1–26 (MMFRLTSVSCFLLVIVCLNLFQVVLT). 4 disulfides stabilise this stretch: Cys29/Cys43, Cys36/Cys48, Cys42/Cys52, and Cys47/Cys56. At Tyr60 the chain carries Tyrosine amide. Positions 64–68 (ATFQE) are excised as a propeptide.

Belongs to the conotoxin I2 superfamily. As to expression, expressed by the venom duct.

It is found in the secreted. The sequence is that of conotoxin S11.3 from Conus striatus (Striated cone).